We begin with the raw amino-acid sequence, 471 residues long: Phosphatidate cytidylyltransferase 3 (471 aa).

The interval M1–A72 is disordered. Positions S21 to Q35 are enriched in polar residues. A run of 8 helical transmembrane segments spans residues W97–M116, Y120–L139, L149–G169, Y196–L216, Y228–F250, W255–F277, G293–G313, and F368–F388.

The protein belongs to the CDS family. The cofactor is Mg(2+).

It localises to the membrane. The enzyme catalyses a 1,2-diacyl-sn-glycero-3-phosphate + CTP + H(+) = a CDP-1,2-diacyl-sn-glycerol + diphosphate. The protein operates within phospholipid metabolism; CDP-diacylglycerol biosynthesis; CDP-diacylglycerol from sn-glycerol 3-phosphate: step 3/3. Its function is as follows. May be involved in the synthesis of minor phospholipids and in modulation of IP3-mediated signal transduction. This chain is Phosphatidate cytidylyltransferase 3, found in Arabidopsis thaliana (Mouse-ear cress).